A 527-amino-acid chain; its full sequence is Mitochondrial substrate carrier family protein V (527 aa).

The span at 1-14 shows a compositional bias: basic and acidic residues; sequence MNSSDFKKSFKEST. The interval 1-29 is disordered; that stretch reads MNSSDFKKSFKESTENNSNTYRPSKTLNT. The Mitochondrial intermembrane portion of the chain corresponds to 1-132; that stretch reads MNSSDFKKSF…VSKKSISKEN (132 aa). A compositionally biased stretch (polar residues) spans 15 to 29; sequence ENNSNTYRPSKTLNT. Solcar repeat units follow at residues 130–220, 253–345, and 430–519; these read KENV…CKKH, MTVP…FKII, and VNMI…CKDL. Residues 133 to 153 form a helical membrane-spanning segment; that stretch reads VNYLVSGSIAGAISRSATAGF. Residues 154 to 187 lie on the Mitochondrial matrix side of the membrane; that stretch reads ERLTIIQQVQGMSQNLSQGYVGCIAAMKEMVKRE. Residues 188–208 traverse the membrane as a helical segment; it reads GFKSIWKGNGANIVKVSPNSG. Residues 209–258 are Mitochondrial intermembrane-facing; it reads IRFLTYEFCKKHFLDNSSNHPSSSSIENGIDGNGVGCGSGSEMKMTVPQT. The helical transmembrane segment at 259–279 threads the bilayer; it reads MFSGAMAGLTSTFFTYPLDVV. The Mitochondrial matrix portion of the chain corresponds to 280–324; sequence RIRLSLQGSCSNDYAAHRYNGITHSFFKIHKDEGVKGLYKGLGTS. Residues 325–345 traverse the membrane as a helical segment; the sequence is IASIVPWVSISFATYEGFKII. Topologically, residues 346–435 are mitochondrial intermembrane; that stretch reads CKKMILNYQI…LKKGVNMICD (90 aa). A helical membrane pass occupies residues 436-456; it reads FVCGALSGAVTMTVCYPLDVL. Residues 457-487 are Mitochondrial matrix-facing; that stretch reads RRRMMIQGIGGNKVLYKNGWDATKKILSNEG. Residues 488–508 traverse the membrane as a helical segment; it reads LVAFYHGIIPAYFKVVPTVAI. The Mitochondrial intermembrane portion of the chain corresponds to 509-527; the sequence is SFAVYEICKDLGSNKYQQK.

It belongs to the mitochondrial carrier (TC 2.A.29) family.

It is found in the mitochondrion inner membrane. Mitochondrial solute carriers shuttle metabolites, nucleotides, and cofactors through the mitochondrial inner membrane. The sequence is that of Mitochondrial substrate carrier family protein V (mcfV) from Dictyostelium discoideum (Social amoeba).